Consider the following 288-residue polypeptide: Octanoyl-[GcvH]:protein N-octanoyltransferase (288 aa).

Positions 44–253 constitute a BPL/LPL catalytic domain; the sequence is AGGPPTFRLW…VLESAMGPQV (210 aa). The Acyl-thioester intermediate role is filled by Cys-148. Residues 269–288 form a disordered region; sequence GREGASETDPRRVAYGVDRP. Residues 272–288 are compositionally biased toward basic and acidic residues; it reads GASETDPRRVAYGVDRP.

This sequence belongs to the octanoyltransferase LipL family.

The catalysed reaction is N(6)-octanoyl-L-lysyl-[glycine-cleavage complex H protein] + L-lysyl-[lipoyl-carrier protein] = N(6)-octanoyl-L-lysyl-[lipoyl-carrier protein] + L-lysyl-[glycine-cleavage complex H protein]. It participates in protein modification; protein lipoylation via endogenous pathway; protein N(6)-(lipoyl)lysine from octanoyl-[acyl-carrier-protein]. Its function is as follows. Catalyzes the amidotransfer (transamidation) of the octanoyl moiety from octanoyl-GcvH to the lipoyl domain of the E2 subunit of lipoate-dependent enzymes. The chain is Octanoyl-[GcvH]:protein N-octanoyltransferase from Kyrpidia tusciae (strain DSM 2912 / NBRC 15312 / T2) (Bacillus tusciae).